The chain runs to 287 residues: Mu-like prophage FluMu DNA transposition protein B (287 aa).

One can recognise an HTH cro/C1-type domain in the interval 7 to 62 (LKQHLSDSQITQAQLAREAGVNAGALSAYLNDNYKGNIADVEAKLAAYLEKKAVQA). Positions 18-37 (QAQLAREAGVNAGALSAYLN) form a DNA-binding region, H-T-H motif. Residue 98 to 105 (GMSGVGKT) coordinates ATP.

Functionally, this protein is a non-specific DNA-binding and ATP-hydrolyzing protein essential for bacteriophage integration and replication. In Haemophilus influenzae (strain ATCC 51907 / DSM 11121 / KW20 / Rd), this protein is Mu-like prophage FluMu DNA transposition protein B.